The sequence spans 302 residues: Probable alpha-L-glutamate ligase (302 aa).

The ATP-grasp domain occupies 104–287 (MQLLSRKGIG…IAGMVFEFLE (184 aa)). Residues K141, 178-179 (EF), D187, and 211-213 (RSN) each bind ATP. D248, E260, and N262 together coordinate Mg(2+). Residues D248, E260, and N262 each coordinate Mn(2+).

The protein belongs to the RimK family. Mg(2+) serves as cofactor. Requires Mn(2+) as cofactor.

This is Probable alpha-L-glutamate ligase from Psychromonas ingrahamii (strain DSM 17664 / CCUG 51855 / 37).